We begin with the raw amino-acid sequence, 591 residues long: Parathyroid hormone/parathyroid hormone-related peptide receptor (591 aa).

An N-terminal signal peptide occupies residues 1–26; it reads MGAARIAPSLALLLCCPVLSSAYALV. The Extracellular segment spans residues 27-188; sequence DADDVFTKEE…REREVFDRLG (162 aa). Cystine bridges form between Cys-48–Cys-117, Cys-108–Cys-148, and Cys-131–Cys-170. The interval 67–104 is disordered; sequence KGWTPASTSGKPRKEKASGKFYPESKENKDVPTGSRRR. A compositionally biased stretch (basic and acidic residues) spans 81–96; sequence EKASGKFYPESKENKD. N-linked (GlcNAc...) asparagine glycans are attached at residues Asn-151, Asn-161, Asn-166, and Asn-176. Residues 189–212 form a helical membrane-spanning segment; that stretch reads MIYTVGYSMSLASLTVAVLILAYF. Residues 213–219 are Cytoplasmic-facing; the sequence is RRLHCTR. A helical transmembrane segment spans residues 220–239; the sequence is NYIHMHMFLSFMLRAASIFV. Topologically, residues 240-282 are extracellular; sequence KDAVLYSGFTLDEAERLTEEELHIIAQVPPPPAAAAVGYAGCR. Residues 283 to 306 traverse the membrane as a helical segment; sequence VAVTFFLYFLATNYYWILVEGLYL. The Cytoplasmic segment spans residues 307–320; it reads HSLIFMAFFSEKKY. The chain crosses the membrane as a helical span at residues 321-342; that stretch reads LWGFTIFGWGLPAVFVAVWVGV. Residues 343-361 are Extracellular-facing; that stretch reads RATLANTGCWDLSSGHKKW. Residues 362 to 382 traverse the membrane as a helical segment; it reads IIQVPILASVVLNFILFINII. Topologically, residues 383–409 are cytoplasmic; that stretch reads RVLATKLRETNAGRCDTRQQYRKLLRS. A helical transmembrane segment spans residues 410-428; it reads TLVLVPLFGVHYTVFMALP. Residues 429 to 440 lie on the Extracellular side of the membrane; sequence YTEVSGTLWQIQ. The helical transmembrane segment at 441–463 threads the bilayer; it reads MHYEMLFNSFQGFFVAIIYCFCN. Residues 464 to 591 lie on the Cytoplasmic side of the membrane; sequence GEVQAEIRKS…LLQEEWETVM (128 aa). The Important for interaction with G proteins motif lies at 474–477; it reads WSRW. Residues 516 to 544 are disordered; the sequence is LPLSPRLPPATTNGHSQLPGHAKPGAPAT.

This sequence belongs to the G-protein coupled receptor 2 family. In terms of assembly, homodimer in the absence of bound ligand. Peptide hormone binding leads to dissociation of the homodimer. N-glycosylated.

The protein localises to the cell membrane. Its function is as follows. G-protein-coupled receptor for parathyroid hormone (PTH) and for parathyroid hormone-related peptide (PTHLH). Ligand binding causes a conformation change that triggers signaling via guanine nucleotide-binding proteins (G proteins) and modulates the activity of downstream effectors, such as adenylate cyclase (cAMP). PTH1R is coupled to G(s) G alpha proteins and mediates activation of adenylate cyclase activity. PTHLH dissociates from PTH1R more rapidly than PTH; as consequence, the cAMP response induced by PTHLH decays faster than the response induced by PTH. The polypeptide is Parathyroid hormone/parathyroid hormone-related peptide receptor (Pth1r) (Rattus norvegicus (Rat)).